We begin with the raw amino-acid sequence, 472 residues long: MMQHASPAPALTMMATQNVPPPPYQDSPQMTATAQPPSKAQAVHISAPSAAASTPVPSAPIDPQAQLEADKRAVYRHPLFPLLTLLFEKCEQATQGSECITSASFDVDIENFVHQQEQEHKPFFSDDPELDNLMVKAIQVLRIHLLELEKVNELCKDFCNRYITCLKTKMHSDNLLRNDLGGPYSPNQPSINLHSQDLLQNSPNSMSGVSNNPQGIVVPASALQQGNIAMTTVNSQVVSGGALYQPVTMVTSQGQVVTQAIPQGAIQIQNTQVNLDLTSLLDNEDKKSKNKRGVLPKHATNIMRSWLFQHLMHPYPTEDEKRQIAAQTNLTLLQVNNWFINARRRILQPMLDASNPDPAPKAKKIKSQHRPTQRFWPNSIAAGVLQQQGGAPGTNPDGSINLDNLQSLSSDSATMAMQQAMMAAHDDSLDGTEEEDEDEMEEEEEEELEEEVDELQTTNVSDLGLEHSDSLE.

A disordered region spans residues 1–62 (MMQHASPAPA…STPVPSAPID (62 aa)). The segment covering 26–38 (DSPQMTATAQPPS) has biased composition (polar residues). The segment covering 46–56 (SAPSAAASTPV) has biased composition (low complexity). Residues 96-179 (GSECITSASF…MHSDNLLRND (84 aa)) enclose the MEIS N-terminal domain. A DNA-binding region (homeobox) is located at residues 291–350 (KRGVLPKHATNIMRSWLFQHLMHPYPTEDEKRQIAAQTNLTLLQVNNWFINARRRILQPM). Disordered regions lie at residues 351 to 371 (LDAS…QHRP), 386 to 405 (QQQG…LDNL), and 422 to 472 (MAAH…DSLE). A compositionally biased stretch (basic residues) spans 361–371 (KAKKIKSQHRP). Residues 429 to 454 (LDGTEEEDEDEMEEEEEEELEEEVDE) show a composition bias toward acidic residues.

It belongs to the TALE/MEIS homeobox family.

The protein localises to the nucleus. This chain is Homeobox protein PKNOX2 (PKNOX2), found in Homo sapiens (Human).